The primary structure comprises 389 residues: 5-hydroxytryptamine receptor 1B (389 aa).

Residues 1-27 (MEAAGAPCAPPPPAGSQTGAPPANLSS) form a disordered region. Topologically, residues 1–45 (MEAAGAPCAPPPPAGSQTGAPPANLSSAPHNCSAEGYIYQDSVAL) are extracellular. Residues 16–27 (SQTGAPPANLSS) show a composition bias toward polar residues. N-linked (GlcNAc...) asparagine glycans are attached at residues Asn-24 and Asn-31. A helical transmembrane segment spans residues 46–71 (PWKVLLVILLALITLATTLSNAFVIA). Residues 72–85 (TVYRTRKLHTPANY) lie on the Cytoplasmic side of the membrane. The chain crosses the membrane as a helical span at residues 86 to 110 (LIASLAVTDLLVSILVMPISTMYTV). The Extracellular portion of the chain corresponds to 111–118 (TGRWTLGQ). A helical membrane pass occupies residues 119–144 (VVCDLWLSSDITCCTASILHLCVIAL). Cys-121 and Cys-198 are oxidised to a cystine. Residues Asp-128 and Thr-133 each contribute to the ergotamine site. Residues 145–147 (DRY) carry the DRY motif; important for ligand-induced conformation changes and signaling motif. The Cytoplasmic segment spans residues 145 to 164 (DRYWAITDAVEYSAKRTPKR). The chain crosses the membrane as a helical span at residues 165–183 (AAVMIALVWVFSISISLPP). Residues 184 to 204 (FFWRQAKAEEEVSDCVVNTDH) lie on the Extracellular side of the membrane. Val-200 provides a ligand contact to ergotamine. Residues 205–228 (ILYTVYSTVGAFYFPTLLLIALYG) traverse the membrane as a helical segment. Over 229-314 (RIYVEARSRI…AARERKATKT (86 aa)) the chain is Cytoplasmic. A compositionally biased stretch (polar residues) spans 258-271 (DSPGSTSSVTSVNS). Residues 258-281 (DSPGSTSSVTSVNSRAPDVPSESG) form a disordered region. A helical membrane pass occupies residues 315-336 (LGIILGAFIVCWLPFFIISLVM). Over 337–346 (PICKDACWFH) the chain is Extracellular. The chain crosses the membrane as a helical span at residues 347–369 (LAIFDFFTWLGYLNSLINPIIYT). Positions 364-368 (NPIIY) match the NPxxY motif; important for ligand-induced conformation changes and signaling motif. Over 370–389 (MSNEDFKQAFHKLIRFKCAG) the chain is Cytoplasmic. The S-palmitoyl cysteine moiety is linked to residue Cys-387.

It belongs to the G-protein coupled receptor 1 family. In terms of assembly, homodimer. Heterodimer with HTR1D. Phosphorylated. Desensitization of the receptor may be mediated by its phosphorylation. In terms of processing, palmitoylated.

It localises to the cell membrane. In terms of biological role, G-protein coupled receptor for 5-hydroxytryptamine (serotonin). Also functions as a receptor for ergot alkaloid derivatives, various anxiolytic and antidepressant drugs and other psychoactive substances, such as lysergic acid diethylamide (LSD). Ligand binding causes a conformation change that triggers signaling via guanine nucleotide-binding proteins (G proteins) and modulates the activity of downstream effectors, such as adenylate cyclase. HTR1B is coupled to G(i)/G(o) G alpha proteins and mediates inhibitory neurotransmission by inhibiting adenylate cyclase activity. Arrestin family members inhibit signaling via G proteins and mediate activation of alternative signaling pathways. Regulates the release of 5-hydroxytryptamine, dopamine and acetylcholine in the brain, and thereby affects neural activity, nociceptive processing, pain perception, mood and behavior. Besides, plays a role in vasoconstriction of cerebral arteries. In Canis lupus familiaris (Dog), this protein is 5-hydroxytryptamine receptor 1B (HTR1B).